The chain runs to 218 residues: MAKTSTSVIAAKTLVHAAALAPIALLGWQFWQVWQSGSDALGADPVAEIEHRTGLWALRLLLITLAITPLRQLTGQAVVIRFRRMLGLYAFFYATVHLAAYLTLDLRGFWTQIFEEILKRPYITVGFAAWLLLMPLAITSTQGWMRRLKRNWGRLHMLIYPIGLLAVLHFWWLVKSDIREPALYAGILAVLLGWRVWKKLSARQTTARRSTPPPATPR.

The next 5 helical transmembrane spans lie at 14-34 (LVHA…WQVW), 60-80 (LLLI…AVVI), 86-106 (LGLY…TLDL), 121-141 (PYIT…ITST), and 155-175 (LHML…WLVK).

The protein belongs to the MsrQ family. In terms of assembly, heterodimer of a catalytic subunit (MsrP) and a heme-binding subunit (MsrQ). FMN is required as a cofactor. The cofactor is heme b.

It is found in the cell inner membrane. In terms of biological role, part of the MsrPQ system that repairs oxidized periplasmic proteins containing methionine sulfoxide residues (Met-O), using respiratory chain electrons. Thus protects these proteins from oxidative-stress damage caused by reactive species of oxygen and chlorine generated by the host defense mechanisms. MsrPQ is essential for the maintenance of envelope integrity under bleach stress, rescuing a wide series of structurally unrelated periplasmic proteins from methionine oxidation. MsrQ provides electrons for reduction to the reductase catalytic subunit MsrP, using the quinone pool of the respiratory chain. The protein is Protein-methionine-sulfoxide reductase heme-binding subunit MsrQ of Xanthomonas axonopodis pv. citri (strain 306).